Consider the following 220-residue polypeptide: Ras-related protein Rab-3A (220 aa).

Residues Ser31, Ser32, Val33, Gly34, Lys35, Thr36, Ser37, Thr48, Pro49, Ser53, and Thr54 each coordinate GTP. Residue Thr36 coordinates Mg(2+). A Switch 1 motif is present at residues 49–58 (PAFVSTVGID). Mg(2+) is bound by residues Thr54 and Asp77. Residue Gly80 participates in GTP binding. The short motif at 80 to 96 (GQERYRTITTAYYRGAM) is the Switch 2 element. Thr86 carries the phosphothreonine modification. The GTP site is built by Asn135, Lys136, Asp138, Ala166, and Lys167. 2 positions are modified to phosphoserine: Ser188 and Ser190. Positions 194–220 (ADPAVTGAKQGPQLTDQQAPPHQDCAC) are disordered. S-geranylgeranyl cysteine attachment occurs at residues Cys218 and Cys220. Cysteine methyl ester is present on Cys220.

This sequence belongs to the small GTPase superfamily. Rab family. Interacts with RIMS1 and RIMS2. Interacts with Rabphilin-3A/RPH3A and Rab effector Noc2/RPH3AL. Interacts with SYTL4. Interacts with RAB3IP. Interacts with SGSM1 and SGSM3. Interacts with SYT1. Interacts with MYH9; this interaction is essential for lysosome exocytosis and plasma membrane repair. Interacts with STXBP1; this interaction promotes RAB3A dissociation from the vesicle membrane. Interacts with SNCA. Interacts with GDI1, GDI2, CHM and CHML; phosphorylation at Thr-86 disrupts these interactions. Interacts with MADD (via uDENN domain); the GTP-bound form is preferred for interaction. Requires Mg(2+) as cofactor. Phosphorylation of Thr-86 in the switch II region by LRRK2 prevents the association of RAB regulatory proteins, including CHM, CHML and RAB GDP dissociation inhibitors GDI1 and GDI2.

The protein resides in the cytoplasm. It is found in the cytosol. Its subcellular location is the lysosome. It localises to the cytoplasmic vesicle. The protein localises to the secretory vesicle. The protein resides in the cell projection. It is found in the axon. Its subcellular location is the cell membrane. It localises to the presynapse. The protein localises to the postsynapse. It carries out the reaction GTP + H2O = GDP + phosphate + H(+). Its activity is regulated as follows. Regulated by guanine nucleotide exchange factors (GEFs) including RAB3IL1 and MADD which promote the exchange of bound GDP for free GTP. Regulated by GTPase activating proteins (GAPs) including RAB3GAP1 and TBC1D10B which increase the GTP hydrolysis activity. Inhibited by GDP dissociation inhibitors (GDIs) which prevent Rab-GDP dissociation. In terms of biological role, the small GTPases Rab are key regulators of intracellular membrane trafficking, from the formation of transport vesicles to their fusion with membranes. Rabs cycle between an inactive GDP-bound form and an active GTP-bound form that is able to recruit to membranes different sets of downstream effectors directly responsible for vesicle formation, movement, tethering and fusion. RAB3A plays a central role in regulated exocytosis and secretion. Controls the recruitment, tethering and docking of secretory vesicles to the plasma membrane. Upon stimulation, switches to its active GTP-bound form, cycles to vesicles and recruits effectors such as RIMS1, RIMS2, Rabphilin-3A/RPH3A, RPH3AL or SYTL4 to help the docking of vesicules onto the plasma membrane. Upon GTP hydrolysis by GTPase-activating protein, dissociates from the vesicle membrane allowing the exocytosis to proceed. Stimulates insulin secretion through interaction with RIMS2 or RPH3AL effectors in pancreatic beta cells. Regulates calcium-dependent lysosome exocytosis and plasma membrane repair (PMR) via the interaction with 2 effectors, SYTL4 and myosin-9/MYH9. Acts as a positive regulator of acrosome content secretion in sperm cells by interacting with RIMS1. Also plays a role in the regulation of dopamine release by interacting with synaptotagmin I/SYT. This chain is Ras-related protein Rab-3A (RAB3A), found in Sus scrofa (Pig).